Reading from the N-terminus, the 442-residue chain is Chromosomal replication initiator protein DnaA (442 aa).

The domain I, interacts with DnaA modulators stretch occupies residues 1 to 69 (METLWDGILS…AQAGEQVIGR (69 aa)). Residues 69–103 (RPIQVDFIVSEQSEEALKPVIEREPAPAAPPANVA) are domain II. Residues 104-320 (SLNSKYTFSR…GALIRAVAYV (217 aa)) form a domain III, AAA+ region region. The ATP site is built by Gly-148, Gly-150, Lys-151, and Thr-152. A domain IV, binds dsDNA region spans residues 321 to 442 (SISGLPMTVE…GNRLEADARH (122 aa)).

It belongs to the DnaA family. As to quaternary structure, oligomerizes as a right-handed, spiral filament on DNA at oriC.

The protein localises to the cytoplasm. Plays an essential role in the initiation and regulation of chromosomal replication. ATP-DnaA binds to the origin of replication (oriC) to initiate formation of the DNA replication initiation complex once per cell cycle. Binds the DnaA box (a 9 base pair repeat at the origin) and separates the double-stranded (ds)DNA. Forms a right-handed helical filament on oriC DNA; dsDNA binds to the exterior of the filament while single-stranded (ss)DNA is stabiized in the filament's interior. The ATP-DnaA-oriC complex binds and stabilizes one strand of the AT-rich DNA unwinding element (DUE), permitting loading of DNA polymerase. After initiation quickly degrades to an ADP-DnaA complex that is not apt for DNA replication. Binds acidic phospholipids. This chain is Chromosomal replication initiator protein DnaA, found in Gloeobacter violaceus (strain ATCC 29082 / PCC 7421).